The following is a 183-amino-acid chain: Small ribosomal subunit protein eS10z (183 aa).

The interval 91–183 (LKKSARPPGR…GAGPTSSSME (93 aa)) is disordered. Residues 109 to 130 (DRPRGPPRFEGDRPRFGDRDGY) show a composition bias toward basic and acidic residues. 2 stretches are compositionally biased toward gly residues: residues 131–146 (RGGP…GEKG) and 161–175 (GRPG…GFGA).

Belongs to the eukaryotic ribosomal protein eS10 family.

The protein resides in the cytoplasm. The protein is Small ribosomal subunit protein eS10z of Oryza sativa subsp. japonica (Rice).